We begin with the raw amino-acid sequence, 118 residues long: Large ribosomal subunit protein bL19 (118 aa).

The protein belongs to the bacterial ribosomal protein bL19 family.

This protein is located at the 30S-50S ribosomal subunit interface and may play a role in the structure and function of the aminoacyl-tRNA binding site. The chain is Large ribosomal subunit protein bL19 from Dictyoglomus turgidum (strain DSM 6724 / Z-1310).